A 124-amino-acid polypeptide reads, in one-letter code: Small ribosomal subunit protein uS12c (124 aa).

It belongs to the universal ribosomal protein uS12 family. Part of the 30S ribosomal subunit.

The protein localises to the plastid. The protein resides in the chloroplast. Functionally, with S4 and S5 plays an important role in translational accuracy. Located at the interface of the 30S and 50S subunits. The chain is Small ribosomal subunit protein uS12c (rps12) from Ostreococcus tauri.